A 628-amino-acid chain; its full sequence is Protein SDS23 (628 aa).

The disordered stretch occupies residues 1–126; sequence MVNPPQPRQM…NKSSSQSIAP (126 aa). Residues 15 to 24 show a composition bias toward polar residues; sequence RLSTSTSSGP. 2 stretches are compositionally biased toward low complexity: residues 40–71 and 109–123; these read QLQH…PGST and SRHA…SSQS. 2 consecutive CBS domains span residues 258-319 and 334-392; these read LHPK…RFPS and GSSN…SHLL. The segment at 551–609 is disordered; that stretch reads GRRTDPQAARNQRRRSSTSTTRSSIDSALSAEGILPSGSAIIGSSNAANTGRRGSVEVS. A compositionally biased stretch (low complexity) spans 587-599; that stretch reads SGSAIIGSSNAAN.

This sequence belongs to the SDS23 family.

It localises to the cytoplasm. The protein resides in the nucleus. Its function is as follows. Involved in DNA replication and cell separation. In Candida albicans (strain SC5314 / ATCC MYA-2876) (Yeast), this protein is Protein SDS23 (SDS24).